Reading from the N-terminus, the 297-residue chain is Nitrogenase iron protein 2 (297 aa).

14–21 (GKGGIGKS) contributes to the ATP binding site. Cysteine 102 is a [4Fe-4S] cluster binding site. The residue at position 105 (arginine 105) is an ADP-ribosylarginine; by dinitrogenase reductase ADP-ribosyltransferase. Cysteine 136 contributes to the [4Fe-4S] cluster binding site.

It belongs to the NifH/BchL/ChlL family. As to quaternary structure, homodimer. It depends on [4Fe-4S] cluster as a cofactor. In terms of processing, the reversible ADP-ribosylation of Arg-105 inactivates the nitrogenase reductase and regulates nitrogenase activity.

The catalysed reaction is N2 + 8 reduced [2Fe-2S]-[ferredoxin] + 16 ATP + 16 H2O = H2 + 8 oxidized [2Fe-2S]-[ferredoxin] + 2 NH4(+) + 16 ADP + 16 phosphate + 6 H(+). Functionally, the key enzymatic reactions in nitrogen fixation are catalyzed by the nitrogenase complex, which has 2 components: the iron protein and the molybdenum-iron protein. This chain is Nitrogenase iron protein 2 (nifH2), found in Nostoc sp. (strain PCC 7120 / SAG 25.82 / UTEX 2576).